A 307-amino-acid chain; its full sequence is D-alanine--D-alanine ligase (307 aa).

The region spanning 108–301 (KEVFAAAGLP…FPEFCAWLVE (194 aa)) is the ATP-grasp domain. 135-185 (LPPPYVVKPNAEGSSVGVYIVHEDANGPPQLAADMPQDLMVETYVPGRELT) contacts ATP. Aspartate 252, glutamate 268, and asparagine 270 together coordinate Mg(2+).

Belongs to the D-alanine--D-alanine ligase family. Mg(2+) serves as cofactor. Requires Mn(2+) as cofactor.

The protein resides in the cytoplasm. It catalyses the reaction 2 D-alanine + ATP = D-alanyl-D-alanine + ADP + phosphate + H(+). It functions in the pathway cell wall biogenesis; peptidoglycan biosynthesis. In terms of biological role, cell wall formation. The polypeptide is D-alanine--D-alanine ligase (Cereibacter sphaeroides (strain ATCC 17029 / ATH 2.4.9) (Rhodobacter sphaeroides)).